The primary structure comprises 159 residues: Urease accessory protein UreE (159 aa).

This sequence belongs to the UreE family.

The protein resides in the cytoplasm. In terms of biological role, involved in urease metallocenter assembly. Binds nickel. Probably functions as a nickel donor during metallocenter assembly. In Pseudomonas entomophila (strain L48), this protein is Urease accessory protein UreE.